The following is a 243-amino-acid chain: Pyrimidodiazepine synthase (243 aa).

Positions glycine 20–proline 102 constitute a GST N-terminal domain. Cysteine 30 serves as the catalytic Nucleophile. Residues lysine 57, valine 70, and glutamate 86–serine 87 each bind glutathione. The 124-residue stretch at aspartate 107–serine 230 folds into the GST C-terminal domain.

Belongs to the GST superfamily. Omega family. Homodimer.

It catalyses the reaction 2-amino-6-acetyl-3,7,8,9-tetrahydro-3H-pyrimido[4,5-b][1,4]diazepin-4-one + glutathione disulfide + H2O = 6-pyruvoyl-5,6,7,8-tetrahydropterin + 2 glutathione. Functionally, mediates the conversion of 2-amino-4-oxo-6-pyruvoyl-5,6,7,8-tetrahydropteridine (6-PTP; also named 6-pyruvoyltetrahydropterin) to 2-amino-6-acetyl-3,7,8,9-tetrahydro-3H-pyrimido(4,5-b)[1,4]diazepin-4-one (pyrimidodiazepine or PDA), a key intermediate in red eye pigment drosopterin biosynthesis. In Drosophila melanogaster (Fruit fly), this protein is Pyrimidodiazepine synthase.